A 430-amino-acid polypeptide reads, in one-letter code: Serine hydroxymethyltransferase (430 aa).

120 to 122 (GHI) is a binding site for (6S)-5,6,7,8-tetrahydrofolate. N6-(pyridoxal phosphate)lysine is present on lysine 226.

The protein belongs to the SHMT family. In terms of assembly, homodimer. Pyridoxal 5'-phosphate is required as a cofactor.

It localises to the cytoplasm. It functions in the pathway amino-acid biosynthesis; glycine biosynthesis; glycine from L-serine: step 1/1. In terms of biological role, catalyzes the reversible interconversion of serine and glycine with a modified folate serving as the one-carbon carrier. Also exhibits a pteridine-independent aldolase activity toward beta-hydroxyamino acids, producing glycine and aldehydes, via a retro-aldol mechanism. This Pyrobaculum calidifontis (strain DSM 21063 / JCM 11548 / VA1) protein is Serine hydroxymethyltransferase.